The chain runs to 1313 residues: Inactive protein tyrosine kinase pTKL (1313 aa).

MORN repeat units follow at residues 20–42 and 45–63; these read YAGD…ENGN and FGHF…IDKN. N-linked (GlcNAc...) asparagine glycans are attached at residues Asn63, Asn131, Asn178, Asn208, Asn254, Asn260, and Asn288. One can recognise an SAM domain in the interval 300 to 365; the sequence is WNKEQVAQWL…LQLIKNLRVT (66 aa). N-linked (GlcNAc...) asparagine glycosylation is found at Asn466, Asn516, Asn525, Asn528, and Asn534. A compositionally biased stretch (basic and acidic residues) spans 569–580; it reads EPIKPNKEKEEN. Positions 569–631 are disordered; it reads EPIKPNKEKE…SEKSSETSSE (63 aa). The span at 586-604 shows a compositional bias: polar residues; that stretch reads PIINSKNETNLLNDSNPTK. N-linked (GlcNAc...) asparagine glycosylation is found at Asn592, Asn598, Asn661, Asn678, Asn729, Asn735, and Asn749. Lys782 is a binding site for ATP. N-linked (GlcNAc...) asparagine glycosylation is found at Asn790, Asn868, Asn940, Asn983, and Asn1000. The region spanning 962 to 1294 is the Protein kinase domain; that stretch reads FRNKNNILCG…FDRILIEISM (333 aa). The RVxF motif motif lies at 1052–1055; sequence KILF. 2 N-linked (GlcNAc...) asparagine glycosylation sites follow: Asn1191 and Asn1198.

Belongs to the protein kinase superfamily. TKL Ser/Thr protein kinase family.

Its subcellular location is the parasitophorous vacuole. It is found in the host cell membrane. The protein localises to the host cytoplasm. The protein resides in the host cytoskeleton. The protein is Inactive protein tyrosine kinase pTKL of Plasmodium berghei (strain Anka).